The chain runs to 467 residues: ATP synthase subunit beta (467 aa).

150-157 (GGAGVGKT) is an ATP binding site.

It belongs to the ATPase alpha/beta chains family. As to quaternary structure, F-type ATPases have 2 components, CF(1) - the catalytic core - and CF(0) - the membrane proton channel. CF(1) has five subunits: alpha(3), beta(3), gamma(1), delta(1), epsilon(1). CF(0) has three main subunits: a(1), b(2) and c(9-12). The alpha and beta chains form an alternating ring which encloses part of the gamma chain. CF(1) is attached to CF(0) by a central stalk formed by the gamma and epsilon chains, while a peripheral stalk is formed by the delta and b chains.

It localises to the cell inner membrane. It carries out the reaction ATP + H2O + 4 H(+)(in) = ADP + phosphate + 5 H(+)(out). In terms of biological role, produces ATP from ADP in the presence of a proton gradient across the membrane. The catalytic sites are hosted primarily by the beta subunits. The protein is ATP synthase subunit beta of Aliivibrio salmonicida (strain LFI1238) (Vibrio salmonicida (strain LFI1238)).